We begin with the raw amino-acid sequence, 299 residues long: Very long chain fatty acid elongase 5 (299 aa).

An N-acetylmethionine modification is found at methionine 1. A run of 7 helical transmembrane segments spans residues 26 to 46, 64 to 84, 112 to 132, 139 to 158, 168 to 187, 205 to 225, and 227 to 247; these read WFLL…LLIV, ILQL…YELV, VLWW…FFIL, ITVL…WFVM, FGAT…YGLS, GQLV…FWPC, and FPLG…ALFT. Positions 274-299 are disordered; it reads VAAVNGHTNSFPSLENSVKPRKQRKD. Residues 279-289 show a composition bias toward polar residues; that stretch reads GHTNSFPSLEN.

This sequence belongs to the ELO family. ELOVL5 subfamily. Interacts with TECR.

The protein resides in the endoplasmic reticulum membrane. It is found in the cell projection. It localises to the dendrite. It carries out the reaction a very-long-chain acyl-CoA + malonyl-CoA + H(+) = a very-long-chain 3-oxoacyl-CoA + CO2 + CoA. It catalyses the reaction (6Z,9Z,12Z)-octadecatrienoyl-CoA + malonyl-CoA + H(+) = (8Z,11Z,14Z)-3-oxoeicosatrienoyl-CoA + CO2 + CoA. The enzyme catalyses (9Z,12Z,15Z)-octadecatrienoyl-CoA + malonyl-CoA + H(+) = (11Z,14Z,17Z)-3-oxoeicosatrienoyl-CoA + CO2 + CoA. The catalysed reaction is (9Z)-hexadecenoyl-CoA + malonyl-CoA + H(+) = 3-oxo-(11Z)-octadecenoyl-CoA + CO2 + CoA. It carries out the reaction (9Z)-octadecenoyl-CoA + malonyl-CoA + H(+) = 3-oxo-(11Z)-eicosenoyl-CoA + CO2 + CoA. It catalyses the reaction (11Z)-octadecenoyl-CoA + malonyl-CoA + H(+) = 3-oxo-(13Z)-eicosenoyl-CoA + CO2 + CoA. The enzyme catalyses (9Z,12Z)-octadecadienoyl-CoA + malonyl-CoA + H(+) = (11Z,14Z)-3-oxoicosa-11,14-dienoyl-CoA + CO2 + CoA. The catalysed reaction is (6Z,9Z,12Z,15Z)-octadecatetraenoyl-CoA + malonyl-CoA + H(+) = (8Z,11Z,14Z,17Z)-3-oxoicosatetraenoyl-CoA + CO2 + CoA. It carries out the reaction (5Z,8Z,11Z,14Z)-eicosatetraenoyl-CoA + malonyl-CoA + H(+) = (7Z,10Z,13Z,16Z)-3-oxodocosatetraenoyl-CoA + CO2 + CoA. It catalyses the reaction (5Z,8Z,11Z,14Z,17Z)-eicosapentaenoyl-CoA + malonyl-CoA + H(+) = 3-oxo-(7Z,10Z,13Z,16Z,19Z)-docosapentaenoyl-CoA + CO2 + CoA. The protein operates within lipid metabolism; polyunsaturated fatty acid biosynthesis. Its function is as follows. Catalyzes the first and rate-limiting reaction of the four reactions that constitute the long-chain fatty acids elongation cycle. This endoplasmic reticulum-bound enzymatic process allows the addition of 2 carbons to the chain of long- and very long-chain fatty acids (VLCFAs) per cycle. Condensing enzyme that acts specifically toward polyunsaturated acyl-CoA with the higher activity toward C18:3(n-6) acyl-CoA. May participate in the production of monounsaturated and of polyunsaturated VLCFAs of different chain lengths that are involved in multiple biological processes as precursors of membrane lipids and lipid mediators. In conditions where the essential linoleic and alpha linoleic fatty acids are lacking it is also involved in the synthesis of Mead acid from oleic acid. This Mus musculus (Mouse) protein is Very long chain fatty acid elongase 5.